Consider the following 336-residue polypeptide: MARLSPLHLRVQCAIRERQLLRPGQRLLVAFSGGQDSFSLLQILRDLQPRWRWQIFVLHCDHRWSADETACAQFLQGWLQQQGLPHAVETADPIRWDEAGARAWRYQQLDKWARTWSCEAVATGHTASDRAETFLWNLLRGTGAAGLVSLDWQRRLDERDPTSAWLVRPLLGLSRWETEEFCRQYQLPVWPDRSNQDLAHGRNRLRLEVMPYLKQHFNPQLEAALNRAATLLQAEHELVVAQAAQLWLQVYEPALPGLRRDPLRAAPLALQRQVMFQFLSLLLPHHPTFEQVEAGIRLLKAGRRSRSPDYPGGGWLEVRGDCVVWVAASQPASFVP.

An ATP-binding site is contributed by 32–37 (SGGQDS).

The protein belongs to the tRNA(Ile)-lysidine synthase family.

It localises to the cytoplasm. It carries out the reaction cytidine(34) in tRNA(Ile2) + L-lysine + ATP = lysidine(34) in tRNA(Ile2) + AMP + diphosphate + H(+). Its function is as follows. Ligates lysine onto the cytidine present at position 34 of the AUA codon-specific tRNA(Ile) that contains the anticodon CAU, in an ATP-dependent manner. Cytidine is converted to lysidine, thus changing the amino acid specificity of the tRNA from methionine to isoleucine. This chain is tRNA(Ile)-lysidine synthase, found in Synechococcus sp. (strain JA-3-3Ab) (Cyanobacteria bacterium Yellowstone A-Prime).